The sequence spans 379 residues: Cytochrome b (379 aa).

4 consecutive transmembrane segments (helical) span residues 33 to 53, 77 to 98, 113 to 133, and 178 to 198; these read FGSL…FLAM, WILR…YIHV, WNIG…GYVL, and FFAF…VHLL. The heme b site is built by His83 and His97. Residues His182 and His196 each contribute to the heme b site. His201 is a binding site for a ubiquinone. 4 consecutive transmembrane segments (helical) span residues 226 to 246, 288 to 308, 320 to 340, and 347 to 367; these read IKDI…VLFS, LGGV…PVLH, LSQC…WIGG, and YVIX…XXXX.

This sequence belongs to the cytochrome b family. In terms of assembly, the cytochrome bc1 complex contains 11 subunits: 3 respiratory subunits (MT-CYB, CYC1 and UQCRFS1), 2 core proteins (UQCRC1 and UQCRC2) and 6 low-molecular weight proteins (UQCRH/QCR6, UQCRB/QCR7, UQCRQ/QCR8, UQCR10/QCR9, UQCR11/QCR10 and a cleavage product of UQCRFS1). This cytochrome bc1 complex then forms a dimer. The cofactor is heme b.

It localises to the mitochondrion inner membrane. Functionally, component of the ubiquinol-cytochrome c reductase complex (complex III or cytochrome b-c1 complex) that is part of the mitochondrial respiratory chain. The b-c1 complex mediates electron transfer from ubiquinol to cytochrome c. Contributes to the generation of a proton gradient across the mitochondrial membrane that is then used for ATP synthesis. This chain is Cytochrome b (MT-CYB), found in Myotis goudotii (Malagasy mouse-eared bat).